We begin with the raw amino-acid sequence, 207 residues long: FMN-dependent NADH:quinone oxidoreductase (207 aa).

FMN-binding positions include Ser-10, Ser-16–Ser-18, Met-96–Leu-99, and Ser-141–Gly-144.

This sequence belongs to the azoreductase type 1 family. Homodimer. Requires FMN as cofactor.

The catalysed reaction is 2 a quinone + NADH + H(+) = 2 a 1,4-benzosemiquinone + NAD(+). It catalyses the reaction N,N-dimethyl-1,4-phenylenediamine + anthranilate + 2 NAD(+) = 2-(4-dimethylaminophenyl)diazenylbenzoate + 2 NADH + 2 H(+). Quinone reductase that provides resistance to thiol-specific stress caused by electrophilic quinones. Functionally, also exhibits azoreductase activity. Catalyzes the reductive cleavage of the azo bond in aromatic azo compounds to the corresponding amines. The polypeptide is FMN-dependent NADH:quinone oxidoreductase (Nostoc sp. (strain PCC 7120 / SAG 25.82 / UTEX 2576)).